A 118-amino-acid chain; its full sequence is Small ribosomal subunit protein uS13 (118 aa).

The interval 93-118 (RSLPVRGQRSKTNARTRKGPRKPIKK) is disordered.

It belongs to the universal ribosomal protein uS13 family. In terms of assembly, part of the 30S ribosomal subunit. Forms a loose heterodimer with protein S19. Forms two bridges to the 50S subunit in the 70S ribosome.

In terms of biological role, located at the top of the head of the 30S subunit, it contacts several helices of the 16S rRNA. In the 70S ribosome it contacts the 23S rRNA (bridge B1a) and protein L5 of the 50S subunit (bridge B1b), connecting the 2 subunits; these bridges are implicated in subunit movement. Contacts the tRNAs in the A and P-sites. The sequence is that of Small ribosomal subunit protein uS13 from Teredinibacter turnerae (strain ATCC 39867 / T7901).